Here is a 366-residue protein sequence, read N- to C-terminus: Histidinol-phosphate aminotransferase 2 (366 aa).

Residues 1–21 (MQVKDQLSLLQPYKPGKSPEQ) form a disordered region. N6-(pyridoxal phosphate)lysine is present on Lys-222.

Belongs to the class-II pyridoxal-phosphate-dependent aminotransferase family. Histidinol-phosphate aminotransferase subfamily. As to quaternary structure, homodimer. Pyridoxal 5'-phosphate serves as cofactor.

The catalysed reaction is L-histidinol phosphate + 2-oxoglutarate = 3-(imidazol-4-yl)-2-oxopropyl phosphate + L-glutamate. The protein operates within amino-acid biosynthesis; L-histidine biosynthesis; L-histidine from 5-phospho-alpha-D-ribose 1-diphosphate: step 7/9. In Bacillus cereus (strain ZK / E33L), this protein is Histidinol-phosphate aminotransferase 2.